The chain runs to 376 residues: Ribonucleoside-diphosphate reductase subunit beta (376 aa).

Residues aspartate 85, glutamate 116, and histidine 119 each contribute to the Fe cation site. Tyrosine 123 is a catalytic residue. 3 residues coordinate Fe cation: glutamate 205, glutamate 239, and histidine 242.

Belongs to the ribonucleoside diphosphate reductase small chain family. Tetramer of two alpha and two beta subunits. Fe cation is required as a cofactor.

The enzyme catalyses a 2'-deoxyribonucleoside 5'-diphosphate + [thioredoxin]-disulfide + H2O = a ribonucleoside 5'-diphosphate + [thioredoxin]-dithiol. Its function is as follows. Provides the precursors necessary for DNA synthesis. Catalyzes the biosynthesis of deoxyribonucleotides from the corresponding ribonucleotides. This Buchnera aphidicola subsp. Schizaphis graminum (strain Sg) protein is Ribonucleoside-diphosphate reductase subunit beta (nrdB).